Here is a 418-residue protein sequence, read N- to C-terminus: MSLNHSDLMFYCPVDDLPHPAASGVNDRTLDWASGQGIPTADRDAGRLRAMAPGLLAARIAPDARGPVLDAFADHHTWLFAFDDEYCDRADGSGITEWASFLARLHRVVETGESALLPGNPYGLALRDIACRLSTYTTPAQLAEWLEALRSYFAALVWERSRRRDDDRLQSLDDYLLLRLRNGAMHTSITLLDTVNGYVLPRELRETPGVRALVEMTALLVSVDNDILSHHKESTSGTREANLLDVLGRTGHTTPGEAVAQAVALRNEIMRQFVRVAERVRTPAAVPELYRFTTGLARWIRANLDFSLTTTRYTGPVTERAALSPHEVPPLSGQGPAPARSDVIGWWWRIPEPLPEPGSDGADTPVRKRRAGDRPPTAGRGGAPHHQRTGPPPPVLPGGITASRSSGLQQSTWRREHR.

Mg(2+) contacts are provided by Asp-83 and Asp-88. The DDXXXD motif signature appears at 83-88 (DDEYCD). Arg-179 is a binding site for substrate. Positions 225 and 229 each coordinate Mg(2+). Lys-232 serves as a coordination point for substrate. Glu-233 contributes to the Mg(2+) binding site. A substrate-binding site is contributed by 312-313 (RY). Residues 354-418 (LPEPGSDGAD…QQSTWRREHR (65 aa)) are disordered. A compositionally biased stretch (polar residues) spans 402–412 (ASRSSGLQQST).

Belongs to the terpene synthase family. Mg(2+) serves as cofactor.

It carries out the reaction (2E,6E)-farnesyl diphosphate + H2O = (+)-T-muurolol + diphosphate. It participates in secondary metabolite biosynthesis; terpenoid biosynthesis. Catalyzes the conversion of (2E,6E)-farnesyl diphosphate (FPP) into (+)-T-muurolol via a 1,10-cyclization, which requires isomerization of FPP to nerolidyl diphosphate (NPP) and then abstraction of the pyrophosphate from intermediate NPP leading to a (E,Z)-germacradienyl (helminthogermacradienyl) cation. The polypeptide is (+)-T-muurolol synthase ((2E,6E)-farnesyl diphosphate cyclizing) (Streptomyces clavuligerus).